A 454-amino-acid polypeptide reads, in one-letter code: Glutamine synthetase (454 aa).

One can recognise a GS beta-grasp domain in the interval 25–111 (QGIDFLRLQF…LICDVVDREG (87 aa)). The region spanning 118-454 (PRQVLKNVLA…WETDRYLEKF (337 aa)) is the GS catalytic domain. Residues Glu-141 and Glu-143 each contribute to the Mg(2+) site. Glu-193 is a binding site for ATP. Glu-198 and Glu-205 together coordinate Mg(2+). L-glutamate contacts are provided by residues 249-250 (NG) and Gly-250. Residue His-254 participates in Mg(2+) binding. ATP-binding positions include 256 to 258 (HIS) and Ser-258. L-glutamate is bound by residues Arg-308, Glu-314, and Arg-326. ATP is bound by residues Arg-326 and Arg-331. Glu-343 contributes to the Mg(2+) binding site. Arg-345 is a binding site for L-glutamate.

This sequence belongs to the glutamine synthetase family. As to quaternary structure, oligomer of 12 subunits arranged in the form of two hexagons. In its feedback-inhibited form, interacts with TnrA in order to block its DNA-binding activity. The cofactor is Mg(2+).

It is found in the cytoplasm. The enzyme catalyses L-glutamate + NH4(+) + ATP = L-glutamine + ADP + phosphate + H(+). Inhibited by glutamine. In terms of biological role, glutamine synthetase (GS) is an unusual multitasking protein that functions as an enzyme, a transcription coregulator, and a chaperone in ammonium assimilation and in the regulation of genes involved in nitrogen metabolism. It catalyzes the ATP-dependent biosynthesis of glutamine from glutamate and ammonia. Feedback-inhibited GlnA also interacts with and regulates the activity of the transcriptional regulator TnrA. During nitrogen limitation, TnrA is in its DNA-binding active state and turns on the transcription of genes required for nitrogen assimilation. Under conditions of nitrogen excess, feedback-inhibited GlnA forms a stable complex with TnrA, which inhibits its DNA-binding activity. In contrast, feedback-inhibited GlnA acts as a chaperone to stabilize the DNA-binding activity of GlnR, which represses the transcription of nitrogen assimilation genes. This Halobacterium salinarum (strain ATCC 700922 / JCM 11081 / NRC-1) (Halobacterium halobium) protein is Glutamine synthetase.